Consider the following 615-residue polypeptide: Protein PSK SIMULATOR 2 (615 aa).

The N-myristoyl glycine moiety is linked to residue Gly-2. Residues 16–27 (KKLRSNDDDKSR) are compositionally biased toward basic and acidic residues. 2 disordered regions span residues 16-59 (KKLR…KSSK) and 506-529 (AHGV…SNTQ). Residues 42-52 (SDSYYSDNYGG) are compositionally biased toward low complexity. Residues 512 to 529 (QETNHVSPPNNRTISNTQ) are compositionally biased toward polar residues.

The protein resides in the nucleus. In terms of biological role, promotes seedling growth probably via the regulation of phytosulfokine (PSK) signaling; PSK are peptide phytohormones acting as growth factors. Involved in PSK-induced root growth. Together with PSI1 and PSI3, required during vegetative growth and reproduction. The chain is Protein PSK SIMULATOR 2 from Arabidopsis thaliana (Mouse-ear cress).